A 79-amino-acid polypeptide reads, in one-letter code: Conotoxin Leo-O1 (79 aa).

The signal sequence occupies residues 1–22 (MKLTCMMLVAVLFLTAWTFVTA). The propeptide occupies 23 to 51 (NVSRNGLENLFPEERHEMMNPEAAKLNNR). 3 disulfides stabilise this stretch: C53–C70, C60–C74, and C69–C78.

It belongs to the conotoxin O1 superfamily. In terms of tissue distribution, expressed by the venom duct.

The protein resides in the secreted. In Conus leopardus (Leopard cone), this protein is Conotoxin Leo-O1.